The primary structure comprises 601 residues: Bifunctional protein GlmU (601 aa).

Residues Met1–Arg375 form a pyrophosphorylase region. Residues Leu10 to Gly13, Lys24, Gln75, and Gly81 to Thr82 contribute to the UDP-N-acetyl-alpha-D-glucosamine site. A Mg(2+)-binding site is contributed by Asp165. Residues Gly201, Glu216, Asn230, and Asn373 each coordinate UDP-N-acetyl-alpha-D-glucosamine. Asn373 is a binding site for Mg(2+). Residues Val376–Tyr396 form a linker region. The N-acetyltransferase stretch occupies residues Gly397 to Gly601. 2 residues coordinate UDP-N-acetyl-alpha-D-glucosamine: Arg478 and Lys496. Residue His508 is the Proton acceptor of the active site. Positions 511 and 522 each coordinate UDP-N-acetyl-alpha-D-glucosamine. Residues Ala525, Asn531–Tyr532, and Ala568 contribute to the acetyl-CoA site.

In the N-terminal section; belongs to the N-acetylglucosamine-1-phosphate uridyltransferase family. This sequence in the C-terminal section; belongs to the transferase hexapeptide repeat family. In terms of assembly, homotrimer. Mg(2+) is required as a cofactor.

Its subcellular location is the cytoplasm. It catalyses the reaction alpha-D-glucosamine 1-phosphate + acetyl-CoA = N-acetyl-alpha-D-glucosamine 1-phosphate + CoA + H(+). It carries out the reaction N-acetyl-alpha-D-glucosamine 1-phosphate + UTP + H(+) = UDP-N-acetyl-alpha-D-glucosamine + diphosphate. It participates in nucleotide-sugar biosynthesis; UDP-N-acetyl-alpha-D-glucosamine biosynthesis; N-acetyl-alpha-D-glucosamine 1-phosphate from alpha-D-glucosamine 6-phosphate (route II): step 2/2. The protein operates within nucleotide-sugar biosynthesis; UDP-N-acetyl-alpha-D-glucosamine biosynthesis; UDP-N-acetyl-alpha-D-glucosamine from N-acetyl-alpha-D-glucosamine 1-phosphate: step 1/1. It functions in the pathway bacterial outer membrane biogenesis; LPS lipid A biosynthesis. In terms of biological role, catalyzes the last two sequential reactions in the de novo biosynthetic pathway for UDP-N-acetylglucosamine (UDP-GlcNAc). The C-terminal domain catalyzes the transfer of acetyl group from acetyl coenzyme A to glucosamine-1-phosphate (GlcN-1-P) to produce N-acetylglucosamine-1-phosphate (GlcNAc-1-P), which is converted into UDP-GlcNAc by the transfer of uridine 5-monophosphate (from uridine 5-triphosphate), a reaction catalyzed by the N-terminal domain. In Tropheryma whipplei (strain TW08/27) (Whipple's bacillus), this protein is Bifunctional protein GlmU.